The following is a 359-amino-acid chain: MLSIPPYYRVKNCNLIVDCQYGSTGKGLLAGYLGALEAPQVLCMAPSPNAGHTLVEEDGTARVHKMLPLGITSPSLERIYLGPGSVIDMDRLLEEYLALPRQVELWVHQNAAVVLQEHRDEEAAGGLAPGSTRSGAGSAFIAKIRRRPGTLLFGEAVRDHPLHGVVRVVDTRTAQDMLFRTRSIQAEGCQGYSLSVHHGAYPYCTARDVTTAQLIADCGLPYDVARIARVVGSMRTYPIRVANRPEAGEWSGPCYPDSVECQFADLGLEQEYTTVTKLPRRIFTFSAIQAHEAIAQNGVDEVFLNFAQYPPSLGALEDILDAIEARAEVTYVGFGPKVTDVYHTPTRAELEGLYARYRR.

Ser23 (proton acceptor) is an active-site residue. ATP contacts are provided by Ser23, Thr24, Gly25, Lys26, and Gly27. Position 23 (Ser23) interacts with dGMP. Ser23 is a Mg(2+) binding site. Residue Asn49 coordinates dGMP. Positions 51, 52, and 53 each coordinate ATP. Residue Gly51 participates in Mg(2+) binding. DGMP contacts are provided by Ser131, Thr132, and Arg146. Gln190 is a binding site for ATP. Position 205 (Thr205) interacts with dGMP. Thr274 is a binding site for Mg(2+). L-aspartate contacts are provided by Thr274, Val275, and Arg280. Asn305 and Gln308 together coordinate ATP.

It belongs to the Caudovirales PurZ family. Mg(2+) is required as a cofactor.

It catalyses the reaction dGMP + L-aspartate + ATP = (2S)-2-amino-2'-deoxyadenylo-succinate + ADP + phosphate + 2 H(+). The protein operates within purine metabolism. Functionally, involved in the synthesis of the atypical nucleotide dZTP (2-amino-2'-deoxyadenosine-5'-triphosphate). Catalyzes the condensation of aspartate with deoxyguanylate into dSMP (N6-succino-2-amino-2'-deoxyadenylate), which undergoes defumarylation and phosphorylation respectively by host PurB and guanylate/nucleoside diphosphate kinases to give dZTP. dZTP is integrated into the viral genome instead of adenine by the viral DNA polymerase. This Z-base probably completely replaces adenosine and forms a triple bond to the opposite T-base. The resulting non-standard viral DNA is called Z-genome. The chemically modified DNA is probably harder for the host bacteria to digest with nucleases or restriction enzymes. This Cyanophage S-2L (Cyanobacteria phage S-2L) protein is N6-succino-2-amino-2'-deoxyadenylate synthase.